A 605-amino-acid polypeptide reads, in one-letter code: MRIKKRNTRGNARNFITRSQAVRKLQISLADFRRLCIFKGIYPREPRNKKKANKGSTAPTTFYYYKDIQYLMHEPVLAKFREHKTFAKKLTKALGRGEVSAAKRLEENRPNYQLDNIIKERYPSFADALRDVDDALNMLFLFANLPATDQVSSRITQSAQQMCDQWSAYIAKERCVRKVFVSIKGVYYQASVKGEDVRWLVPYKFPENIPSDVDFRIMLTFLEFYSTLLHFVLFKLYTDAGLVYPPKLDIKKNKLIGGLSAYILESNDEKSSLAVKPKELSENVEVQELGANTLKTALKADSNEHDEEEQDQDQEQNVEDVELDKFEDTNKNQGDQLEQPSKFDSPVATLFSEFVFYVGREVPLDIVEFLILSCGGSAVSEATLDQLTDKQDIDLSKVTHQIVDRPVLKNKVANRTYVQPQWIFDSINKCELVPANLYLPGEPLPPHLSPWGDSTGYDPTAENDEDVEGSDAEEIDESADEDAESEEVEEDDTAAVALNEDDEDDEDELRQQKELELEAQGISYSEAKDVIDSESSDKKKKKKRKATEEEEEKDLKLIMMSNKQRKLYKKMKYSNEKKDEKIEQLKQKKKQIAKTKAKLAKLDKK.

A BRCT domain is found at 346–440 (PVATLFSEFV…ELVPANLYLP (95 aa)). The disordered stretch occupies residues 449 to 553 (SPWGDSTGYD…RKATEEEEEK (105 aa)). Acidic residues predominate over residues 461–508 (AENDEDVEGSDAEEIDESADEDAESEEVEEDDTAAVALNEDDEDDEDE). Residues 526–537 (EAKDVIDSESSD) are compositionally biased toward basic and acidic residues. Positions 533-605 (SESSDKKKKK…KAKLAKLDKK (73 aa)) form a coiled coil.

This sequence belongs to the pescadillo family. As to quaternary structure, component of the NOP7 complex, composed of ERB1, NOP7 and YTM1. The complex is held together by ERB1, which interacts with NOP7 via its N-terminal domain and with YTM1 via a high-affinity interaction between the seven-bladed beta-propeller domains of the 2 proteins. The NOP7 complex associates with the 66S pre-ribosome.

Its subcellular location is the nucleus. The protein localises to the nucleolus. It is found in the nucleoplasm. Component of the NOP7 complex, which is required for maturation of the 25S and 5.8S ribosomal RNAs and formation of the 60S ribosome. The sequence is that of Pescadillo homolog from Kluyveromyces lactis (strain ATCC 8585 / CBS 2359 / DSM 70799 / NBRC 1267 / NRRL Y-1140 / WM37) (Yeast).